Reading from the N-terminus, the 373-residue chain is GDP-mannose 4,6 dehydratase 2 (373 aa).

Over residues 1-15 (MASENNGSRSDSESI) the composition is skewed to polar residues. The segment at 1-21 (MASENNGSRSDSESITAPKAD) is disordered. NADP(+) contacts are provided by residues 35–40 (GITGQD), arginine 60, 91–92 (DL), 113–117 (LAAQS), and tyrosine 128. Serine 117 contacts substrate. Position 162 (serine 162) interacts with substrate. The active site involves serine 162. Catalysis depends on nucleophile residues glutamate 164 and tyrosine 185. Tyrosine 185 contacts substrate. NADP(+) is bound at residue lysine 189. Asparagine 214 lines the substrate pocket. Histidine 215 and arginine 220 together coordinate NADP(+). Residues 220–228 (RGENFVTRK), glycine 247, arginine 253, and 314–317 (RPAE) each bind substrate.

This sequence belongs to the NAD(P)-dependent epimerase/dehydratase family. GDP-mannose 4,6-dehydratase subfamily. In terms of assembly, homotetramer. Binds to GER1. Requires NADP(+) as cofactor. In terms of tissue distribution, expressed in roots, flowers, siliques, leaves and stems. Not expressed in the root meristem and the proximal part of the elongation zone, or in emerging lateral roots. Expressed in trichomes and guard cells, and in pollen just before anthesis.

It carries out the reaction GDP-alpha-D-mannose = GDP-4-dehydro-alpha-D-rhamnose + H2O. It functions in the pathway nucleotide-sugar biosynthesis; GDP-L-fucose biosynthesis via de novo pathway; GDP-L-fucose from GDP-alpha-D-mannose: step 1/2. In terms of biological role, catalyzes the conversion of GDP-D-mannose to GDP-4-dehydro-6-deoxy-D-mannose. The protein is GDP-mannose 4,6 dehydratase 2 (MUR1) of Arabidopsis thaliana (Mouse-ear cress).